The following is a 235-amino-acid chain: Aspartate/glutamate leucyltransferase (235 aa).

It belongs to the R-transferase family. Bpt subfamily.

The protein localises to the cytoplasm. It carries out the reaction N-terminal L-glutamyl-[protein] + L-leucyl-tRNA(Leu) = N-terminal L-leucyl-L-glutamyl-[protein] + tRNA(Leu) + H(+). The enzyme catalyses N-terminal L-aspartyl-[protein] + L-leucyl-tRNA(Leu) = N-terminal L-leucyl-L-aspartyl-[protein] + tRNA(Leu) + H(+). In terms of biological role, functions in the N-end rule pathway of protein degradation where it conjugates Leu from its aminoacyl-tRNA to the N-termini of proteins containing an N-terminal aspartate or glutamate. The polypeptide is Aspartate/glutamate leucyltransferase (Pseudomonas putida (strain GB-1)).